Consider the following 362-residue polypeptide: Protein OCA4 (362 aa).

Its function is as follows. Required for replication of Brome mosaic virus (BMV). In Saccharomyces cerevisiae (strain ATCC 204508 / S288c) (Baker's yeast), this protein is Protein OCA4 (OCA4).